Here is a 355-residue protein sequence, read N- to C-terminus: Peptide chain release factor 1 (355 aa).

Glutamine 233 carries the post-translational modification N5-methylglutamine.

This sequence belongs to the prokaryotic/mitochondrial release factor family. Methylated by PrmC. Methylation increases the termination efficiency of RF1.

It localises to the cytoplasm. Peptide chain release factor 1 directs the termination of translation in response to the peptide chain termination codons UAG and UAA. This Syntrophobacter fumaroxidans (strain DSM 10017 / MPOB) protein is Peptide chain release factor 1.